The following is a 580-amino-acid chain: YTH domain-containing family protein 2 (580 aa).

Residues 1-45 form a disordered region; it reads MSASSLLEQRPKGQGNKVQNGSVHQKDGLNDDDFEPYLSPQARPN. At serine 2 the chain carries N-acetylserine. A phosphoserine mark is found at serine 2, serine 4, serine 5, serine 22, serine 39, and serine 196. The segment at 2-385 is localization to mRNA processing bodies (P-bodies); sequence SASSLLEQRP…QAGSGSTPSE (384 aa). Positions 247–388 are disordered; sequence AKQQPKLKTK…SGSTPSEPHP (142 aa). Positions 291-317 are enriched in polar residues; it reads ALVQNIGQQPTQGSPQPVGQQANNSPP. Low complexity predominate over residues 338-350; sequence AQLSVQQQAAQPT. Serine 360 carries the post-translational modification Phosphoserine. Over residues 360 to 372 the composition is skewed to gly residues; sequence SGFGHNGVDGNGV. Residues 373-384 are compositionally biased toward polar residues; sequence GQTQAGSGSTPS. Residues 386–580 are interaction with m6A-containing mRNAs; that stretch reads PHPVLEKLRS…VKKERQGRGK (195 aa). Serine 395 carries the post-translational modification Phosphoserine. The YTH domain maps to 411–545; the sequence is GRVFIIKSYS…EKAKQVLKII (135 aa). Residues 417–419, aspartate 423, 433–434, asparagine 463, tryptophan 487, and tryptophan 492 contribute to the RNA site; these read KSY and WC.

The protein belongs to the YTHDF family. YTHDF2 subfamily. Interacts with CNOT1; interaction is direct and promotes recruitment of the CCR4-NOT complex. Interacts with YTHDF3. Interacts with RIDA/HRSP12; interaction leads to recruitment of the ribonuclease P/MRP complex. In terms of processing, ubiquitinated by the SCF(SKP2) complex, leading to its degradation.

It is found in the cytoplasm. The protein resides in the cytosol. The protein localises to the P-body. Its subcellular location is the stress granule. It localises to the nucleus. Specifically recognizes and binds N6-methyladenosine (m6A)-containing RNAs, and regulates their stability. M6A is a modification present at internal sites of mRNAs and some non-coding RNAs and plays a role in mRNA stability and processing. Acts as a regulator of mRNA stability by promoting degradation of m6A-containing mRNAs via interaction with the CCR4-NOT and ribonuclease P/MRP complexes, depending on the context. The YTHDF paralogs (YTHDF1, YTHDF2 and YTHDF3) share m6A-containing mRNAs targets and act redundantly to mediate mRNA degradation and cellular differentiation. M6A-containing mRNAs containing a binding site for RIDA/HRSP12 (5'-GGUUC-3') are preferentially degraded by endoribonucleolytic cleavage: cooperative binding of RIDA/HRSP12 and YTHDF2 to transcripts leads to recruitment of the ribonuclease P/MRP complex. Other m6A-containing mRNAs undergo deadenylation via direct interaction between YTHDF2 and CNOT1, leading to recruitment of the CCR4-NOT and subsequent deadenylation of m6A-containing mRNAs. Required maternally to regulate oocyte maturation: probably acts by binding to m6A-containing mRNAs, thereby regulating maternal transcript dosage during oocyte maturation, which is essential for the competence of oocytes to sustain early zygotic development. Also required during spermatogenesis: regulates spermagonial adhesion by promoting degradation of m6A-containing transcripts coding for matrix metallopeptidases. Also involved in hematopoietic stem cells specification by binding to m6A-containing mRNAs, leading to promote their degradation. Also acts as a regulator of neural development by promoting m6A-dependent degradation of neural development-related mRNA targets. Inhibits neural specification of induced pluripotent stem cells by binding to methylated neural-specific mRNAs and promoting their degradation, thereby restraining neural differentiation. Regulates circadian regulation of hepatic lipid metabolism: acts by promoting m6A-dependent degradation of PPARA transcripts. Regulates the innate immune response to infection by inhibiting the type I interferon response: acts by binding to m6A-containing IFNB transcripts and promoting their degradation. May also act as a promoter of cap-independent mRNA translation following heat shock stress: upon stress, relocalizes to the nucleus and specifically binds mRNAs with some m6A methylation mark at their 5'-UTR, protecting demethylation of mRNAs by FTO, thereby promoting cap-independent mRNA translation. Regulates mitotic entry by promoting the phase-specific m6A-dependent degradation of WEE1 transcripts. Promotes formation of phase-separated membraneless compartments, such as P-bodies or stress granules, by undergoing liquid-liquid phase separation upon binding to mRNAs containing multiple m6A-modified residues: polymethylated mRNAs act as a multivalent scaffold for the binding of YTHDF proteins, juxtaposing their disordered regions and thereby leading to phase separation. The resulting mRNA-YTHDF complexes then partition into different endogenous phase-separated membraneless compartments, such as P-bodies, stress granules or neuronal RNA granules. May also recognize and bind RNAs modified by C5-methylcytosine (m5C) and act as a regulator of rRNA processing. The protein is YTH domain-containing family protein 2 of Bos taurus (Bovine).